The following is a 422-amino-acid chain: UDP-N-acetylglucosamine 1-carboxyvinyltransferase (422 aa).

22-23 lines the phosphoenolpyruvate pocket; that stretch reads KN. Arg-93 is a binding site for UDP-N-acetyl-alpha-D-glucosamine. Cys-117 (proton donor) is an active-site residue. 2-(S-cysteinyl)pyruvic acid O-phosphothioketal is present on Cys-117. Residues 122–126, Asp-308, and Leu-330 contribute to the UDP-N-acetyl-alpha-D-glucosamine site; that span reads RPVDL.

This sequence belongs to the EPSP synthase family. MurA subfamily.

The protein localises to the cytoplasm. It carries out the reaction phosphoenolpyruvate + UDP-N-acetyl-alpha-D-glucosamine = UDP-N-acetyl-3-O-(1-carboxyvinyl)-alpha-D-glucosamine + phosphate. It functions in the pathway cell wall biogenesis; peptidoglycan biosynthesis. Functionally, cell wall formation. Adds enolpyruvyl to UDP-N-acetylglucosamine. The protein is UDP-N-acetylglucosamine 1-carboxyvinyltransferase of Helicobacter pylori (strain P12).